The sequence spans 236 residues: Rho-related GTP-binding protein RhoV (236 aa).

The disordered stretch occupies residues 1–28; sequence MPPRELSEAEPPPLPASTPPPRRRSAPP. Residues 10 to 20 show a composition bias toward pro residues; sequence EPPPLPASTPP. A Phosphoserine modification is found at Ser-25. GTP-binding positions include 38–45, 85–89, and 143–146; these read GDGAVGKS, DTAGQ, and TQAD. A lipid anchor (S-palmitoyl cysteine) is attached at Cys-234.

This sequence belongs to the small GTPase superfamily. Rho family. In terms of assembly, interacts with PAK2. Requires Mg(2+) as cofactor. In terms of tissue distribution, highly expressed in brain and testis and at lower levels in spleen and lung.

Its subcellular location is the cell membrane. It localises to the endosome membrane. Plays a role in the control of the actin cytoskeleton via activation of the JNK pathway. This Rattus norvegicus (Rat) protein is Rho-related GTP-binding protein RhoV.